The primary structure comprises 268 residues: Nickel import ATP-binding protein NikE (268 aa).

The region spanning L4–N252 is the ABC transporter domain. Residue G45–S52 coordinates ATP.

This sequence belongs to the ABC transporter superfamily. Nickel importer (TC 3.A.1.5.3) family. The complex is composed of two ATP-binding proteins (NikD and NikE), two transmembrane proteins (NikB and NikC) and a solute-binding protein (NikA).

Its subcellular location is the cell inner membrane. It carries out the reaction Ni(2+)(out) + ATP + H2O = Ni(2+)(in) + ADP + phosphate + H(+). Part of the ABC transporter complex NikABCDE involved in nickel import. Responsible for energy coupling to the transport system. This Shigella flexneri serotype 5b (strain 8401) protein is Nickel import ATP-binding protein NikE.